The chain runs to 155 residues: FUN14 domain-containing protein 1 (155 aa).

Topologically, residues 1 to 47 (MATRNPPPQEYESDDDSYEVLDLTEYARRHHWWNRVFGHSSGPMVEK) are cytoplasmic. Phosphoserine occurs at positions 13 and 17. A Phosphotyrosine; by SRC modification is found at Y18. A YXXL motif is present at residues 18 to 21 (YEVL). A helical transmembrane segment spans residues 48-68 (YSVATQIVMGGVSGWCAGFLF). Residues 69–74 (QKVGKL) are Mitochondrial intermembrane-facing. A helical membrane pass occupies residues 75-95 (AATAVGGGFLLLQIASHSGYV). The Cytoplasmic portion of the chain corresponds to 96–133 (QIDWKRVEKDVNKAKRQIKKRANKAAPEINNIIEEATE). K119 participates in a covalent cross-link: Glycyl lysine isopeptide (Lys-Gly) (interchain with G-Cter in ubiquitin). Residues 134–154 (FVKQNIVISSGFVGGFLLGLA) form a helical membrane-spanning segment. A topological domain (mitochondrial intermembrane) is located at residue S155.

Belongs to the FUN14 family. As to quaternary structure, interacts (via YXXL motif) with MAP1 LC3 family proteins MAP1LC3A, MAP1LC3B and GABARAP. Interacts with DNM1L/DPR1. Interacts with GPX4. Post-translationally, phosphorylation at Ser-13 by CK2 and at Tyr-18 by SRC inhibits activation of mitophagy. Following hypoxia, dephosphorylated at Tyr-18, leading to interaction with MAP1 LC3 family proteins and triggering mitophagy. Dephosphorylation is mediated by PGAM5. Phosphorylated by ULK1 at Ser-17 which enhances FUNDC1 binding to LC3. Ubiquitinated on Lys-119. Deubiquitinated by USP19; leading to hypoxia-induced DRP1 oligomerization and GTPase activity.

The protein localises to the mitochondrion outer membrane. In terms of biological role, integral mitochondrial outer-membrane protein that mediates the formation of mitochondria-associated endoplasmic reticulum membranes (MAMs). In turn, mediates angiogenesis and neoangiogenesis through interference with intracellular Ca(2+) communication and regulation of the vascular endothelial growth factor receptor KDR/VEGFR2 expression at both mRNA and protein levels. Also acts as an activator of hypoxia-induced mitophagy, an important mechanism for mitochondrial quality and homeostasis, by interacting with and recruiting LC3 protein family to mitochondria. Mechanistically, recruits DRP1 at ER-mitochondria contact sites leading to DRP1 oligomerization and GTPase activity to facilitate mitochondrial fission during hypoxia. Additionally, plays a role in hepatic ferroptosis by interacting directly with glutathione peroxidase/GPX4 to facilitate its recruitment into mitochondria through TOM/TIM complex where it is degraded by mitophagy. The chain is FUN14 domain-containing protein 1 (FUNDC1) from Bos taurus (Bovine).